A 488-amino-acid chain; its full sequence is Germacrene A hydroxylase (488 aa).

Topologically, residues 1–6 (MELSLT) are cytoplasmic. A helical; Signal-anchor for type II membrane protein transmembrane segment spans residues 7-23 (TSIALATIVLILYKLAT). Residues 24 to 488 (RPKSNKKRLP…KTELILVPSF (465 aa)) lie on the Lumenal side of the membrane. Residues Asn-260 and Asn-379 are each glycosylated (N-linked (GlcNAc...) asparagine). Cys-432 contacts heme.

Belongs to the cytochrome P450 family. The cofactor is heme.

The protein localises to the endoplasmic reticulum membrane. It localises to the microsome membrane. The catalysed reaction is (+)-(R)-germacrene A + 3 reduced [NADPH--hemoprotein reductase] + 3 O2 = germacra-1(10),4,11(13)-trien-12-oate + 3 oxidized [NADPH--hemoprotein reductase] + 4 H2O + 4 H(+). The protein operates within secondary metabolite biosynthesis; terpenoid biosynthesis. Its activity is regulated as follows. Inhibited by cytochrome C, miconazole, aminobenzotriazole, metyrapone and clotrimazole. In terms of biological role, involved in the biosynthesis of germacrene-derived sesquiterpene lactones. Catalyzes three consecutive oxidations of germacrene A to produce germacrene A acid. Could also catalyze the three-step oxidation of non-natural substrate amorphadiene to artemisinic acid. Can use beta-elemene as substrate. The sequence is that of Germacrene A hydroxylase from Cichorium intybus (Chicory).